The primary structure comprises 109 residues: Large ribosomal subunit protein uL22 (109 aa).

It belongs to the universal ribosomal protein uL22 family. In terms of assembly, part of the 50S ribosomal subunit.

Its function is as follows. This protein binds specifically to 23S rRNA; its binding is stimulated by other ribosomal proteins, e.g. L4, L17, and L20. It is important during the early stages of 50S assembly. It makes multiple contacts with different domains of the 23S rRNA in the assembled 50S subunit and ribosome. Functionally, the globular domain of the protein is located near the polypeptide exit tunnel on the outside of the subunit, while an extended beta-hairpin is found that lines the wall of the exit tunnel in the center of the 70S ribosome. This is Large ribosomal subunit protein uL22 from Psychrobacter sp. (strain PRwf-1).